The chain runs to 647 residues: Acetyl-coenzyme A synthetase (647 aa).

CoA contacts are provided by residues 190–193 (RGGR), T308, and N332. Residues 384 to 386 (GEP), 408 to 413 (DTWWQT), D497, and R512 contribute to the ATP site. Residue S520 participates in CoA binding. Residue R523 coordinates ATP. Residues V534, H536, and V539 each contribute to the Mg(2+) site. R581 lines the CoA pocket. An N6-acetyllysine modification is found at K606.

The protein belongs to the ATP-dependent AMP-binding enzyme family. Requires Mg(2+) as cofactor. In terms of processing, acetylated. Deacetylation by the SIR2-homolog deacetylase activates the enzyme.

The catalysed reaction is acetate + ATP + CoA = acetyl-CoA + AMP + diphosphate. Its function is as follows. Catalyzes the conversion of acetate into acetyl-CoA (AcCoA), an essential intermediate at the junction of anabolic and catabolic pathways. AcsA undergoes a two-step reaction. In the first half reaction, AcsA combines acetate with ATP to form acetyl-adenylate (AcAMP) intermediate. In the second half reaction, it can then transfer the acetyl group from AcAMP to the sulfhydryl group of CoA, forming the product AcCoA. This Parvibaculum lavamentivorans (strain DS-1 / DSM 13023 / NCIMB 13966) protein is Acetyl-coenzyme A synthetase.